The chain runs to 166 residues: NADH-ubiquinone oxidoreductase chain 6 (166 aa).

A run of 5 helical transmembrane segments spans residues 1 to 21, 26 to 46, 47 to 67, 86 to 106, and 139 to 159; these read MMYF…AFAS, IYGG…IVSL, GGSF…LVVF, TVVL…YEFF, and CGGW…FVVL.

It belongs to the complex I subunit 6 family. Core subunit of respiratory chain NADH dehydrogenase (Complex I) which is composed of 45 different subunits.

Its subcellular location is the mitochondrion inner membrane. It carries out the reaction a ubiquinone + NADH + 5 H(+)(in) = a ubiquinol + NAD(+) + 4 H(+)(out). Its function is as follows. Core subunit of the mitochondrial membrane respiratory chain NADH dehydrogenase (Complex I) which catalyzes electron transfer from NADH through the respiratory chain, using ubiquinone as an electron acceptor. Essential for the catalytic activity and assembly of complex I. The chain is NADH-ubiquinone oxidoreductase chain 6 (MT-ND6) from Tachyglossus aculeatus aculeatus (Southeast Australian short-beaked echidna).